Consider the following 458-residue polypeptide: Brassinosteroid-related acyltransferase 1 (458 aa).

His-164 functions as the Proton acceptor in the catalytic mechanism.

This sequence belongs to the plant acyltransferase family. As to expression, highly expressed in young tissues and vascular bundles. Mostly expressed in young leaves, primary roots, flowers (including petals and sepals), and siliques.

The protein localises to the endoplasmic reticulum. Its subcellular location is the nucleus. Its pathway is plant hormone biosynthesis; brassinosteroid biosynthesis. Functionally, brassinosteroids (BR) acyltransferase with acyl-CoA ligase activity toward brassinolide (BL), castasterone (CS), typhasterol (TY), 6-deoxotyphasterol (6-deoxoTY), and 6-deoxocastasterone (6-deoxoCS) and thus converts them to corresponding lauroyl esters. Regulates BR homeostasis and promotes BR-mediated cell growth regulation. Involved in vascular bundle development. This Arabidopsis thaliana (Mouse-ear cress) protein is Brassinosteroid-related acyltransferase 1.